Here is a 959-residue protein sequence, read N- to C-terminus: Glycine dehydrogenase (decarboxylating) (959 aa).

Lysine 708 carries the N6-(pyridoxal phosphate)lysine modification.

This sequence belongs to the GcvP family. The glycine cleavage system is composed of four proteins: P, T, L and H. Pyridoxal 5'-phosphate is required as a cofactor.

It catalyses the reaction N(6)-[(R)-lipoyl]-L-lysyl-[glycine-cleavage complex H protein] + glycine + H(+) = N(6)-[(R)-S(8)-aminomethyldihydrolipoyl]-L-lysyl-[glycine-cleavage complex H protein] + CO2. In terms of biological role, the glycine cleavage system catalyzes the degradation of glycine. The P protein binds the alpha-amino group of glycine through its pyridoxal phosphate cofactor; CO(2) is released and the remaining methylamine moiety is then transferred to the lipoamide cofactor of the H protein. In Yersinia pseudotuberculosis serotype O:1b (strain IP 31758), this protein is Glycine dehydrogenase (decarboxylating).